A 96-amino-acid chain; its full sequence is Co-chaperonin GroES (96 aa).

The protein belongs to the GroES chaperonin family. Heptamer of 7 subunits arranged in a ring. Interacts with the chaperonin GroEL.

It localises to the cytoplasm. Together with the chaperonin GroEL, plays an essential role in assisting protein folding. The GroEL-GroES system forms a nano-cage that allows encapsulation of the non-native substrate proteins and provides a physical environment optimized to promote and accelerate protein folding. GroES binds to the apical surface of the GroEL ring, thereby capping the opening of the GroEL channel. The polypeptide is Co-chaperonin GroES (Buchnera aphidicola subsp. Acyrthosiphon pisum (strain 5A)).